The following is a 191-amino-acid chain: Protein YceI (191 aa).

The signal sequence occupies residues 1–22; the sequence is MKKNLLGFTLASLLFTTGSAVA.

This sequence belongs to the UPF0312 family. Type 1 subfamily.

It localises to the periplasm. The sequence is that of Protein YceI from Salmonella dublin (strain CT_02021853).